Reading from the N-terminus, the 358-residue chain is U5 small nuclear ribonucleoprotein 40 kDa protein (358 aa).

K18 participates in a covalent cross-link: Glycyl lysine isopeptide (Lys-Gly) (interchain with G-Cter in SUMO2). R21 bears the Asymmetric dimethylarginine mark. 7 WD repeats span residues 65-104, 108-147, 150-190, 192-231, 234-273, 284-323, and 326-358; these read GHEG…DNYA, GHSG…RVKR, GHTS…AIQT, QNTY…LTYT, GHAD…PKER, NFEK…ILYK, and GHAG…GEIQ. A Glycyl lysine isopeptide (Lys-Gly) (interchain with G-Cter in SUMO2) cross-link involves residue K271.

Component of the pre-catalytic and catalytic spliceosome complexes. Component of the postcatalytic spliceosome P complex. Part of the U5 snRNP complex. Interacts with PRPF8. Component of the U4/U6-U5 tri-snRNP complex composed of the U4, U6 and U5 snRNAs and at least PRPF3, PRPF4, PRPF6, PRPF8, PRPF31, SNRNP200, TXNL4A, WDR57, SNRNP40, DDX23, CD2BP2, PPIH, SNU13, EFTUD2, SART1 and USP39. Component of the minor spliceosome, which splices U12-type introns.

The protein localises to the nucleus. Its function is as follows. Required for pre-mRNA splicing as component of the activated spliceosome. Component of the U5 small nuclear ribonucleoprotein (snRNP) complex and the U4/U6-U5 tri-snRNP complex, building blocks of the spliceosome. As a component of the minor spliceosome, involved in the splicing of U12-type introns in pre-mRNAs. The polypeptide is U5 small nuclear ribonucleoprotein 40 kDa protein (SNRNP40) (Bos taurus (Bovine)).